Consider the following 106-residue polypeptide: Ribulose bisphosphate carboxylase small subunit (106 aa).

The protein belongs to the RuBisCO small chain family. In terms of assembly, heterohexadecamer of 8 large and 8 small subunits.

The protein localises to the plastid. The protein resides in the cyanelle. Functionally, ruBisCO catalyzes two reactions: the carboxylation of D-ribulose 1,5-bisphosphate, the primary event in carbon dioxide fixation, as well as the oxidative fragmentation of the pentose substrate. Both reactions occur simultaneously and in competition at the same active site. Although the small subunit is not catalytic it is essential for maximal activity. The polypeptide is Ribulose bisphosphate carboxylase small subunit (Cyanophora paradoxa).